Reading from the N-terminus, the 377-residue chain is 1,3,6,8-tetrahydroxynaphthalene synthase (377 aa).

Cysteine 164 is a catalytic residue.

Belongs to the thiolase-like superfamily. Chalcone/stilbene synthases family. Homodimer.

It catalyses the reaction 5 malonyl-CoA + 5 H(+) = naphthalene-1,3,6,8-tetrol + 5 CO2 + 5 CoA + H2O. It functions in the pathway pigment biosynthesis; melanin biosynthesis. Its function is as follows. Involved in the biosynthesis of melanin but also various secondary metabolites containing a naphthoquinone ring. Catalyzes the iterative condensation of five CoA-linked malonyl units to form a pentaketide intermediate. THNS subsequently catalyzes the dual intramolecular Claisen and aldol condensations of this linear intermediate to produce the fused ring of 1,3,6,8-tetrahydroxynaphthalene (THN). This chain is 1,3,6,8-tetrahydroxynaphthalene synthase, found in Streptomyces peucetius subsp. caesius.